Consider the following 91-residue polypeptide: Signal recognition particle 19 kDa protein (91 aa).

It belongs to the SRP19 family. As to quaternary structure, part of the signal recognition particle protein translocation system, which is composed of SRP and FtsY. Archaeal SRP consists of a 7S RNA molecule of 300 nucleotides and two protein subunits: SRP54 and SRP19.

Its subcellular location is the cytoplasm. Functionally, involved in targeting and insertion of nascent membrane proteins into the cytoplasmic membrane. Binds directly to 7S RNA and mediates binding of the 54 kDa subunit of the SRP. The protein is Signal recognition particle 19 kDa protein of Methanoregula boonei (strain DSM 21154 / JCM 14090 / 6A8).